We begin with the raw amino-acid sequence, 30 residues long: Rothein 3.4 (30 aa).

Leucine 30 is modified (leucine amide).

Belongs to the frog skin active peptide (FSAP) family. Rothein subfamily. In terms of tissue distribution, expressed by the skin dorsal glands.

The protein resides in the secreted. In terms of biological role, lacks antimicrobial activity. Does not inhibit the formation of NO by neuronal nitric oxide. In Litoria rothii (Roth's tree frog), this protein is Rothein 3.4.